The chain runs to 92 residues: UPF0235 protein PF1765 (92 aa).

The protein belongs to the UPF0235 family.

In Pyrococcus furiosus (strain ATCC 43587 / DSM 3638 / JCM 8422 / Vc1), this protein is UPF0235 protein PF1765.